The primary structure comprises 348 residues: MNRTDELRTARIESLVTPAELALRYPVTPGVATHVTDSRRRIEKILNGEDKRLLVIIGPCSIHDLTAAMEYATRLQSLRNQYQSRLEIVMRTYFEKPRTVVGWKGLISDPDLNGSYRVNHGLELARKLLLQVNELGVPTATEFLDMVTGQFIADLISWGAIGARTTESQIHREMASALSCPVGFKNGTDGNTRIAVDAIRAARASHMFLSPDKNGQMTIYQTSGNPYGHIIMRGGKKPNYHADDIAAACDTLHEFDLPEHLVVDFSHGNCQKQHRRQLEVCEDICQQIRNGSTAIAGIMAESFLREGTQKIVGSQPLTYGQSITDPCLGWEDTERLVEKLASAVDTRF.

It belongs to the class-I DAHP synthase family.

The enzyme catalyses D-erythrose 4-phosphate + phosphoenolpyruvate + H2O = 7-phospho-2-dehydro-3-deoxy-D-arabino-heptonate + phosphate. It functions in the pathway metabolic intermediate biosynthesis; chorismate biosynthesis; chorismate from D-erythrose 4-phosphate and phosphoenolpyruvate: step 1/7. Functionally, stereospecific condensation of phosphoenolpyruvate (PEP) and D-erythrose-4-phosphate (E4P) giving rise to 3-deoxy-D-arabino-heptulosonate-7-phosphate (DAHP). This is Phospho-2-dehydro-3-deoxyheptonate aldolase, Trp-sensitive (aroH) from Escherichia coli (strain K12).